A 478-amino-acid polypeptide reads, in one-letter code: Zinc metalloproteinase/disintegrin (478 aa).

An N-terminal signal peptide occupies residues 1 to 20; that stretch reads MIEVLLVTICLAVFPYPGSS. Positions 21–190 are excised as a propeptide; that stretch reads IILESGNVDD…KASQLYLTPE (170 aa). Gln191 carries the post-translational modification Pyrrolidone carboxylic acid. Residues 197-392 enclose the Peptidase M12B domain; that stretch reads RYIELAIVVD…SKPQCIINAP (196 aa). Ca(2+) contacts are provided by Glu200 and Asp284. 3 disulfides stabilise this stretch: Cys308/Cys387, Cys349/Cys371, and Cys351/Cys354. A Zn(2+)-binding site is contributed by His333. Glu334 is a catalytic residue. His337 and His343 together coordinate Zn(2+). Positions 387 and 390 each coordinate Ca(2+). Residues 393–410 constitute a propeptide that is removed on maturation; sequence LRTDTVSTPVSGNEFLEA. Positions 400 to 478 constitute a Disintegrin domain; that stretch reads TPVSGNEFLE…GQSADCPRNS (79 aa). Cystine bridges form between Cys414–Cys429, Cys416–Cys424, Cys423–Cys446, Cys437–Cys443, Cys442–Cys467, and Cys455–Cys474. A Cell attachment site motif is present at residues 459–461; it reads RGD. Residues 459-478 are disordered; the sequence is RGDNPDDRCTGQSADCPRNS. Residues 468 to 478 show a composition bias toward polar residues; sequence TGQSADCPRNS.

The protein belongs to the venom metalloproteinase (M12B) family. P-II subfamily. P-IIa sub-subfamily. As to quaternary structure, monomer. Zn(2+) serves as cofactor. Not N-glycosylated. Expressed by the venom gland.

The protein localises to the secreted. It catalyses the reaction Cleavage of 3-Asn-|-Gln-4, 10-His-|-Leu-11 and 14-Ala-|-Leu-15 in the insulin B chain, and the bond Z-Gly-Pro-|-Leu-Gly-Pro in a small molecule substrate of microbial collagenase.. In terms of biological role, zinc protease that induces hemorrhage. Its function is as follows. Inhibits platelet aggregation induced by ADP, thrombin, and collagen. Acts by inhibiting fibrinogen interaction with platelet receptors GPIIb/GPIIIa (ITGA2B/ITGB3). This Protobothrops flavoviridis (Habu) protein is Zinc metalloproteinase/disintegrin.